A 135-amino-acid polypeptide reads, in one-letter code: Large ribosomal subunit protein eL32 (135 aa).

Belongs to the eukaryotic ribosomal protein eL32 family. As to quaternary structure, component of the large ribosomal subunit.

Its subcellular location is the cytoplasm. In terms of biological role, component of the large ribosomal subunit. The ribosome is a large ribonucleoprotein complex responsible for the synthesis of proteins in the cell. In Ictalurus punctatus (Channel catfish), this protein is Large ribosomal subunit protein eL32 (rpl32).